A 284-amino-acid polypeptide reads, in one-letter code: NAD kinase (284 aa).

Aspartate 60 functions as the Proton acceptor in the catalytic mechanism. NAD(+) contacts are provided by residues 60-61 (DG), 134-135 (ND), arginine 145, lysine 162, aspartate 164, 175-180 (TAYSFS), and glutamine 234.

The protein belongs to the NAD kinase family. A divalent metal cation is required as a cofactor.

Its subcellular location is the cytoplasm. It catalyses the reaction NAD(+) + ATP = ADP + NADP(+) + H(+). Involved in the regulation of the intracellular balance of NAD and NADP, and is a key enzyme in the biosynthesis of NADP. Catalyzes specifically the phosphorylation on 2'-hydroxyl of the adenosine moiety of NAD to yield NADP. This chain is NAD kinase, found in Clostridium beijerinckii (strain ATCC 51743 / NCIMB 8052) (Clostridium acetobutylicum).